The sequence spans 70 residues: Protein SlyX homolog (70 aa).

Residues 51–70 form a disordered region; sequence RMREAEANRPGPTNEPPPHY.

It belongs to the SlyX family.

This Nitrobacter hamburgensis (strain DSM 10229 / NCIMB 13809 / X14) protein is Protein SlyX homolog.